The sequence spans 267 residues: 4-hydroxy-tetrahydrodipicolinate reductase (267 aa).

Residue 10-15 coordinates NAD(+); the sequence is GCLGKQ. NADP(+) is bound at residue Arg37. Residues 99–101 and 122–125 each bind NAD(+); these read GTT and TTNV. The active-site Proton donor/acceptor is the His154. (S)-2,3,4,5-tetrahydrodipicolinate is bound at residue His155. The active-site Proton donor is the Lys158. 164–165 is a (S)-2,3,4,5-tetrahydrodipicolinate binding site; sequence GT.

It belongs to the DapB family.

It localises to the cytoplasm. It carries out the reaction (S)-2,3,4,5-tetrahydrodipicolinate + NAD(+) + H2O = (2S,4S)-4-hydroxy-2,3,4,5-tetrahydrodipicolinate + NADH + H(+). The enzyme catalyses (S)-2,3,4,5-tetrahydrodipicolinate + NADP(+) + H2O = (2S,4S)-4-hydroxy-2,3,4,5-tetrahydrodipicolinate + NADPH + H(+). It participates in amino-acid biosynthesis; L-lysine biosynthesis via DAP pathway; (S)-tetrahydrodipicolinate from L-aspartate: step 4/4. Functionally, catalyzes the conversion of 4-hydroxy-tetrahydrodipicolinate (HTPA) to tetrahydrodipicolinate. The chain is 4-hydroxy-tetrahydrodipicolinate reductase from Ehrlichia chaffeensis (strain ATCC CRL-10679 / Arkansas).